We begin with the raw amino-acid sequence, 354 residues long: UDP-N-acetylglucosamine--N-acetylmuramyl-(pentapeptide) pyrophosphoryl-undecaprenol N-acetylglucosamine transferase (354 aa).

Residues T15 to G17, N127, R163, S191, I244, A263 to E268, and Q288 contribute to the UDP-N-acetyl-alpha-D-glucosamine site.

Belongs to the glycosyltransferase 28 family. MurG subfamily.

The protein resides in the cell inner membrane. The enzyme catalyses di-trans,octa-cis-undecaprenyl diphospho-N-acetyl-alpha-D-muramoyl-L-alanyl-D-glutamyl-meso-2,6-diaminopimeloyl-D-alanyl-D-alanine + UDP-N-acetyl-alpha-D-glucosamine = di-trans,octa-cis-undecaprenyl diphospho-[N-acetyl-alpha-D-glucosaminyl-(1-&gt;4)]-N-acetyl-alpha-D-muramoyl-L-alanyl-D-glutamyl-meso-2,6-diaminopimeloyl-D-alanyl-D-alanine + UDP + H(+). The protein operates within cell wall biogenesis; peptidoglycan biosynthesis. Functionally, cell wall formation. Catalyzes the transfer of a GlcNAc subunit on undecaprenyl-pyrophosphoryl-MurNAc-pentapeptide (lipid intermediate I) to form undecaprenyl-pyrophosphoryl-MurNAc-(pentapeptide)GlcNAc (lipid intermediate II). The chain is UDP-N-acetylglucosamine--N-acetylmuramyl-(pentapeptide) pyrophosphoryl-undecaprenol N-acetylglucosamine transferase from Serratia proteamaculans (strain 568).